The following is a 283-amino-acid chain: 4-diphosphocytidyl-2-C-methyl-D-erythritol kinase (283 aa).

Lysine 10 is a catalytic residue. An ATP-binding site is contributed by 99 to 109 (PMGGGLGGGSS). The active site involves aspartate 141.

This sequence belongs to the GHMP kinase family. IspE subfamily. Homodimer.

The catalysed reaction is 4-CDP-2-C-methyl-D-erythritol + ATP = 4-CDP-2-C-methyl-D-erythritol 2-phosphate + ADP + H(+). It functions in the pathway isoprenoid biosynthesis; isopentenyl diphosphate biosynthesis via DXP pathway; isopentenyl diphosphate from 1-deoxy-D-xylulose 5-phosphate: step 3/6. Functionally, catalyzes the phosphorylation of the position 2 hydroxy group of 4-diphosphocytidyl-2C-methyl-D-erythritol. This chain is 4-diphosphocytidyl-2-C-methyl-D-erythritol kinase, found in Escherichia coli O7:K1 (strain IAI39 / ExPEC).